Consider the following 445-residue polypeptide: Tubby-like F-box protein 14 (445 aa).

One can recognise an F-box domain in the interval 56–114; that stretch reads SSCWANLPPELLRDVIERLEASEAAWPSRKNVVACAAVCRTWRDMCREIVKNPEFCGKI.

This sequence belongs to the TUB family. Ubiquitous.

The chain is Tubby-like F-box protein 14 (TULP14) from Oryza sativa subsp. japonica (Rice).